The sequence spans 432 residues: C4-dicarboxylate transport protein (432 aa).

Helical transmembrane passes span 8–28 (ILYVQVLFAICVGILLGHYWP), 44–64 (LIKMIIGPIIFCTVVTGIAGM), 78–98 (LLYFEVVSTFALLIGLGAAHL), 148–168 (GDILQILLVSLFFGAALAVLG), 188–208 (IVHVITKVAPIGAFGAMAFTI), 222–242 (LIGTFYFTAIIFVLVVLGTIA), 307–327 (IYMTMAVIFIAQATGIELTLM), and 355–375 (AATLAVVPTIPVAGMVLILGI).

It belongs to the dicarboxylate/amino acid:cation symporter (DAACS) (TC 2.A.23) family.

It localises to the cell inner membrane. Functionally, responsible for the transport of dicarboxylates such as succinate, fumarate, and malate from the periplasm across the membrane. This is C4-dicarboxylate transport protein from Cupriavidus necator (strain ATCC 17699 / DSM 428 / KCTC 22496 / NCIMB 10442 / H16 / Stanier 337) (Ralstonia eutropha).